The sequence spans 689 residues: DNA topoisomerase 1 (689 aa).

Residues 3–113 form the Toprim domain; sequence DNLVIVESPA…KENRVVFNEI (111 aa). Mg(2+) is bound by residues E9 and D82. Positions 129–557 constitute a Topo IA-type catalytic domain; the sequence is EMNLVDAQQA…FFSSFKQDVE (429 aa). An interaction with DNA region spans residues 163–168; the sequence is SAGRVQ. The O-(5'-phospho-DNA)-tyrosine intermediate role is filled by Y298. The disordered stretch occupies residues 328–357; that stretch reads SKRKASGKQGDQDAHEAIRPSSTMRTPDDM. 3 C4-type zinc fingers span residues 577 to 603, 617 to 645, and 658 to 681; these read CEVC…FPDC, CPKC…YPEC, and CPKC…CSNC.

This sequence belongs to the type IA topoisomerase family. As to quaternary structure, monomer. Mg(2+) is required as a cofactor.

The enzyme catalyses ATP-independent breakage of single-stranded DNA, followed by passage and rejoining.. In terms of biological role, releases the supercoiling and torsional tension of DNA, which is introduced during the DNA replication and transcription, by transiently cleaving and rejoining one strand of the DNA duplex. Introduces a single-strand break via transesterification at a target site in duplex DNA. The scissile phosphodiester is attacked by the catalytic tyrosine of the enzyme, resulting in the formation of a DNA-(5'-phosphotyrosyl)-enzyme intermediate and the expulsion of a 3'-OH DNA strand. The free DNA strand then undergoes passage around the unbroken strand, thus removing DNA supercoils. Finally, in the religation step, the DNA 3'-OH attacks the covalent intermediate to expel the active-site tyrosine and restore the DNA phosphodiester backbone. In Staphylococcus aureus (strain bovine RF122 / ET3-1), this protein is DNA topoisomerase 1.